Here is a 353-residue protein sequence, read N- to C-terminus: Photosystem II D2 protein (353 aa).

Residue threonine 2 is modified to N-acetylthreonine. The residue at position 2 (threonine 2) is a Phosphothreonine. The chain crosses the membrane as a helical span at residues 41-61 (CAYFALGGWFTGTTFVTSWYT). A chlorophyll a-binding site is contributed by histidine 118. Residues 125–141 (GFMLRQFELARSVQLRP) traverse the membrane as a helical segment. Pheophytin a-binding residues include glutamine 130 and asparagine 143. Residues 153 to 166 (VFVSVFLIYPLGQS) form a helical membrane-spanning segment. Histidine 198 contacts chlorophyll a. A helical transmembrane segment spans residues 208 to 228 (AALLCAIHGATVENTLFEDGD). A plastoquinone is bound by residues histidine 215 and phenylalanine 262. Histidine 215 is a binding site for Fe cation. Fe cation is bound at residue histidine 269. A helical membrane pass occupies residues 279–295 (GLWMSALGVVGLALNLR).

Belongs to the reaction center PufL/M/PsbA/D family. As to quaternary structure, PSII is composed of 1 copy each of membrane proteins PsbA, PsbB, PsbC, PsbD, PsbE, PsbF, PsbH, PsbI, PsbJ, PsbK, PsbL, PsbM, PsbT, PsbX, PsbY, PsbZ, Psb30/Ycf12, at least 3 peripheral proteins of the oxygen-evolving complex and a large number of cofactors. It forms dimeric complexes. It depends on The D1/D2 heterodimer binds P680, chlorophylls that are the primary electron donor of PSII, and subsequent electron acceptors. It shares a non-heme iron and each subunit binds pheophytin, quinone, additional chlorophylls, carotenoids and lipids. There is also a Cl(-1) ion associated with D1 and D2, which is required for oxygen evolution. The PSII complex binds additional chlorophylls, carotenoids and specific lipids. as a cofactor.

It localises to the plastid. Its subcellular location is the chloroplast thylakoid membrane. The catalysed reaction is 2 a plastoquinone + 4 hnu + 2 H2O = 2 a plastoquinol + O2. In terms of biological role, photosystem II (PSII) is a light-driven water:plastoquinone oxidoreductase that uses light energy to abstract electrons from H(2)O, generating O(2) and a proton gradient subsequently used for ATP formation. It consists of a core antenna complex that captures photons, and an electron transfer chain that converts photonic excitation into a charge separation. The D1/D2 (PsbA/PsbD) reaction center heterodimer binds P680, the primary electron donor of PSII as well as several subsequent electron acceptors. D2 is needed for assembly of a stable PSII complex. This chain is Photosystem II D2 protein, found in Phaseolus vulgaris (Kidney bean).